The chain runs to 832 residues: Beta-galactosidase (832 aa).

An N-terminal signal peptide occupies residues 1–25 (MALKLVLMLMVALLAAVWSPPAVTA). Catalysis depends on Glu183, which acts as the Proton donor. Catalysis depends on Glu252, which acts as the Nucleophile. The 92-residue stretch at 741-832 (AYGRPKVHLS…KKLAVEAICE (92 aa)) folds into the SUEL-type lectin domain.

Belongs to the glycosyl hydrolase 35 family.

Its subcellular location is the secreted. The protein localises to the extracellular space. It localises to the apoplast. It catalyses the reaction Hydrolysis of terminal non-reducing beta-D-galactose residues in beta-D-galactosides.. This Asparagus officinalis (Garden asparagus) protein is Beta-galactosidase.